A 236-amino-acid chain; its full sequence is Class B acid phosphatase (236 aa).

Positions 1 to 22 are cleaved as a signal peptide; the sequence is MKNVMKLSVIALLTAAAVPAMA. Catalysis depends on Asp67, which acts as the Nucleophile. Mg(2+) contacts are provided by Asp67 and Asp69. Asp69 (proton donor) is an active-site residue. Substrate contacts are provided by residues 136 to 137 and Lys176; that span reads TG. Residue Asp191 coordinates Mg(2+).

Belongs to the class B bacterial acid phosphatase family. In terms of assembly, homotetramer. Requires Mg(2+) as cofactor.

Its subcellular location is the periplasm. It carries out the reaction a phosphate monoester + H2O = an alcohol + phosphate. Functionally, dephosphorylates several organic phosphate monoesters. Also has a phosphotransferase activity catalyzing the transfer of low-energy phosphate groups from organic phosphate monoesters to free hydroxyl groups of various organic compounds. In Haemophilus influenzae (strain ATCC 51907 / DSM 11121 / KW20 / Rd), this protein is Class B acid phosphatase (aphA).